The primary structure comprises 158 residues: SsrA-binding protein (158 aa).

The segment at 131-158 is disordered; that stretch reads YDKRQTLRERQDKREADRAMSSHRRLGE.

The protein belongs to the SmpB family.

It localises to the cytoplasm. Required for rescue of stalled ribosomes mediated by trans-translation. Binds to transfer-messenger RNA (tmRNA), required for stable association of tmRNA with ribosomes. tmRNA and SmpB together mimic tRNA shape, replacing the anticodon stem-loop with SmpB. tmRNA is encoded by the ssrA gene; the 2 termini fold to resemble tRNA(Ala) and it encodes a 'tag peptide', a short internal open reading frame. During trans-translation Ala-aminoacylated tmRNA acts like a tRNA, entering the A-site of stalled ribosomes, displacing the stalled mRNA. The ribosome then switches to translate the ORF on the tmRNA; the nascent peptide is terminated with the 'tag peptide' encoded by the tmRNA and targeted for degradation. The ribosome is freed to recommence translation, which seems to be the essential function of trans-translation. In Clavibacter michiganensis subsp. michiganensis (strain NCPPB 382), this protein is SsrA-binding protein.